We begin with the raw amino-acid sequence, 236 residues long: Eukaryotic translation initiation factor 3 subunit K (236 aa).

The PCI domain maps to 42 to 222; it reads YDKDILVTTL…TIKSRNIEEK (181 aa).

This sequence belongs to the eIF-3 subunit K family. Component of the eukaryotic translation initiation factor 3 (eIF-3) complex.

The protein localises to the cytoplasm. Component of the eukaryotic translation initiation factor 3 (eIF-3) complex, which is involved in protein synthesis of a specialized repertoire of mRNAs and, together with other initiation factors, stimulates binding of mRNA and methionyl-tRNAi to the 40S ribosome. The eIF-3 complex specifically targets and initiates translation of a subset of mRNAs involved in cell proliferation. This chain is Eukaryotic translation initiation factor 3 subunit K, found in Brugia malayi (Filarial nematode worm).